The primary structure comprises 1648 residues: Kinesin-like protein KIF14 (1648 aa).

The disordered stretch occupies residues 1–27; that stretch reads MSLHSTHNRNNSGDILDIPSSQNSSSL. The required for PRC1-binding stretch occupies residues 1–356; that stretch reads MSLHSTHNRN…AGKDPLKVEN (356 aa). Residues serine 12 and serine 272 each carry the phosphoserine modification. Residue threonine 277 is modified to Phosphothreonine. Serine 346 bears the Phosphoserine mark. The tract at residues 356-737 is required for microtubule-binding with high affinity; the sequence is NSQVTVAVRV…AAQRNSRNID (382 aa). The Kinesin motor domain maps to 358–701; sequence QVTVAVRVRP…LRYANQARLI (344 aa). 447–454 lines the ATP pocket; it reads GQTGSGKS. A coiled-coil region spans residues 705–791; it reads AKVNEDMNAK…QETKELQKAG (87 aa). One can recognise an FHA domain in the interval 825-891; the sequence is TTVGKYKPNS…LRHGDRVILG (67 aa). Residues 901-1648 form a required for CIT-binding region; the sequence is PVEVQKGKRP…ECTPSRIQWV (748 aa). Phosphothreonine is present on threonine 915. Positions 922–1079 form a coiled coil; it reads KDFEFAKNEL…QNRNNRDKTF (158 aa). Phosphoserine is present on residues serine 937 and serine 1292. Coiled coils occupy residues 1332-1348 and 1468-1500; these read TNIA…VKKL and ENIF…VNRA. Residues 1600-1648 are disordered; sequence NTKEEHQQSKSSGIDGSKNKGVPKRVYELHGSSPAVSSEECTPSRIQWV. Positions 1633–1648 are enriched in polar residues; that stretch reads PAVSSEECTPSRIQWV.

The protein belongs to the TRAFAC class myosin-kinesin ATPase superfamily. Kinesin family. As to quaternary structure, directly interacts with PRC1 within a complex also containing KIF4A, KIF20A and KIF23; targets to the central spindle. Directly interacts with CIT depending on the activation state of the kinase (stronger interaction with the kinase-dead form); targets to the midbody. Interacts with ARRB2; the interaction is detected in the nucleus upon OR1D2 stimulation. Interacts with AKT1; the interaction is detected in the plasma membrane upon INS stimulation and promotes AKT1 phosphorylation. Interacts with SVIL; at midbody during cytokinesis. Interacts with RADIL (via PDZ domain); recruits RADIL to the microtubule network restricting RADIL from interaction with activated RAP1A.

It localises to the nucleus. The protein resides in the cytoplasm. Its subcellular location is the cytoskeleton. The protein localises to the spindle. It is found in the midbody. Its function is as follows. Microtubule motor protein that binds to microtubules with high affinity through each tubulin heterodimer and has an ATPase activity. Plays a role in many processes like cell division, cytokinesis and also in cell proliferation and apoptosis. During cytokinesis, targets to central spindle and midbody through its interaction with PRC1 and CIT respectively. Regulates cell growth through regulation of cell cycle progression and cytokinesis. During cell cycle progression acts through SCF-dependent proteasomal ubiquitin-dependent protein catabolic process which controls CDKN1B degradation, resulting in positive regulation of cyclins, including CCNE1, CCND1 and CCNB1. During late neurogenesis, regulates the cerebellar, cerebral cortex and olfactory bulb development through regulation of apoptosis, cell proliferation and cell division. Also is required for chromosome congression and alignment during mitotic cell cycle process. Regulates cell spreading, focal adhesion dynamics, and cell migration through its interaction with RADIL resulting in regulation of RAP1A-mediated inside-out integrin activation by tethering RADIL on microtubules. The polypeptide is Kinesin-like protein KIF14 (Homo sapiens (Human)).